The primary structure comprises 360 residues: Deoxyhypusine hydroxylase (360 aa).

HEAT-like PBS-type repeat units lie at residues 56–82 (LKHELAYVLGQLEDARALPTLKKILQD), 89–115 (VRHEAAEAMGAISDPSVLPILEQYRSD), and 213–245 (ERYRAMFALRNVAHGGGDGAIQAVLALARGLQD). His58, Glu59, His91, and Glu92 together coordinate Fe cation. Fe cation is bound by residues His252, Glu253, His285, and Glu286.

This sequence belongs to the deoxyhypusine hydroxylase family. Fe(2+) serves as cofactor.

The protein resides in the cytoplasm. Its subcellular location is the nucleus. The enzyme catalyses [eIF5A protein]-deoxyhypusine + AH2 + O2 = [eIF5A protein]-hypusine + A + H2O. Its pathway is protein modification; eIF5A hypusination. Its function is as follows. Catalyzes the hydroxylation of the N(6)-(4-aminobutyl)-L-lysine intermediate to form hypusine, an essential post-translational modification only found in mature eIF-5A factor. The sequence is that of Deoxyhypusine hydroxylase from Mycosarcoma maydis (Corn smut fungus).